Reading from the N-terminus, the 102-residue chain is ATP-dependent Clp protease adapter protein ClpS (102 aa).

Belongs to the ClpS family. In terms of assembly, binds to the N-terminal domain of the chaperone ClpA.

Its function is as follows. Involved in the modulation of the specificity of the ClpAP-mediated ATP-dependent protein degradation. The sequence is that of ATP-dependent Clp protease adapter protein ClpS from Shewanella sediminis (strain HAW-EB3).